The following is a 442-amino-acid chain: 26S proteasome non-ATPase regulatory subunit 12 homolog A (442 aa).

Residues 6 to 137 adopt a coiled-coil conformation; that stretch reads KLEATIDRLL…EAADLMQEVA (132 aa). Positions 232–403 constitute a PCI domain; it reads EICRSYKAIY…GIVCFQIAKD (172 aa).

Belongs to the proteasome subunit p55 family. Component of the 19S regulatory particle (RP/PA700) lid subcomplex of the 26S proteasome. The 26S proteasome is composed of a core protease (CP), known as the 20S proteasome, capped at one or both ends by the 19S regulatory particle (RP/PA700). The RP/PA700 complex is composed of at least 17 different subunits in two subcomplexes, the base and the lid, which form the portions proximal and distal to the 20S proteolytic core, respectively. Ubiquitous with highest expression in flowers.

It localises to the cytoplasm. It is found in the nucleus. Functionally, acts as a regulatory subunit of the 26 proteasome which is involved in the ATP-dependent degradation of ubiquitinated proteins. Required for gametogenesis and sporophyte development. Acts redundantly with RPN5B. This Arabidopsis thaliana (Mouse-ear cress) protein is 26S proteasome non-ATPase regulatory subunit 12 homolog A (RPN5A).